The primary structure comprises 79 residues: Translational regulator CsrA (79 aa).

The protein belongs to the CsrA/RsmA family. Homodimer; the beta-strands of each monomer intercalate to form a hydrophobic core, while the alpha-helices form wings that extend away from the core.

It localises to the cytoplasm. Its function is as follows. A translational regulator that binds mRNA to regulate translation initiation and/or mRNA stability. Usually binds in the 5'-UTR at or near the Shine-Dalgarno sequence preventing ribosome-binding, thus repressing translation. Its main target seems to be the major flagellin gene, while its function is anatagonized by FliW. The sequence is that of Translational regulator CsrA from Maridesulfovibrio salexigens (strain ATCC 14822 / DSM 2638 / NCIMB 8403 / VKM B-1763) (Desulfovibrio salexigens).